The sequence spans 272 residues: F-actin-capping protein subunit beta (272 aa).

This sequence belongs to the F-actin-capping protein beta subunit family. Component of the F-actin capping complex, composed of a heterodimer of an alpha and a beta subunit.

The protein localises to the cytoplasm. The protein resides in the cytoskeleton. In terms of biological role, F-actin-capping proteins bind in a Ca(2+)-independent manner to the fast growing ends of actin filaments (barbed end) thereby blocking the exchange of subunits at these ends. Unlike other capping proteins (such as gelsolin and severin), these proteins do not sever actin filaments. In Dictyostelium discoideum (Social amoeba), this protein is F-actin-capping protein subunit beta (acpA).